The following is a 172-amino-acid chain: Transmembrane protein 91 (172 aa).

Residues 1 to 97 (MDNSSIQELQ…SPLLPHDHLG (97 aa)) lie on the Extracellular side of the membrane. Residues 60–86 (GLGEPETPDFEDTLSSDSDSDDDGGDR) are disordered. The segment covering 65–83 (ETPDFEDTLSSDSDSDDDG) has biased composition (acidic residues). Residues 98–118 (LAVFSVLCCFWPVGIAAFCLA) form a helical membrane-spanning segment. Residues 119 to 139 (HKTNKAWAKGDVQGAGAASRR) are Cytoplasmic-facing. The chain crosses the membrane as a helical span at residues 140–160 (AFLLGVLAVGLGLCTYAAALV). The Extracellular portion of the chain corresponds to 161–172 (TLAAYLASRDPP).

The protein belongs to the CD225/Dispanin family.

It localises to the membrane. The polypeptide is Transmembrane protein 91 (Tmem91) (Mus musculus (Mouse)).